A 280-amino-acid polypeptide reads, in one-letter code: Transmembrane protein 45B (280 aa).

7 consecutive transmembrane segments (helical) span residues 7–27, 49–69, 96–116, 120–140, 150–170, 184–204, and 216–236; these read HALPGSFFLVFGLWWSVKYPL, LIEGILKAAFALIGILAEQFV, MYLFYGISGVVDILTFLPLNL, LDRLSLGIAVIIEGLLFYYHV, IHSLLLIAVFGGAISIMIEVF, LTILQGTWFWQIGFVLYPLGG, and VMFITMCFCWHYAVALLIMAI.

It belongs to the TMEM45 family.

It is found in the membrane. This is Transmembrane protein 45B (tmem45b) from Xenopus tropicalis (Western clawed frog).